Reading from the N-terminus, the 285-residue chain is Vesicle-associated membrane protein 725 (285 aa).

Residues Met-1 to Leu-261 lie on the Cytoplasmic side of the membrane. Residues Phe-75–Leu-179 enclose the Longin domain. One can recognise a v-SNARE coiled-coil homology domain in the interval Lys-195–Glu-255. A helical; Anchor for type IV membrane protein transmembrane segment spans residues Ile-262–Phe-282. At Lys-283–Thr-285 the chain is on the vesicular side.

The protein belongs to the synaptobrevin family. As to expression, expressed in flowers, leaves, stems and roots.

The protein resides in the cell membrane. It is found in the early endosome membrane. Involved in the targeting and/or fusion of transport vesicles to their target membrane. This is Vesicle-associated membrane protein 725 from Arabidopsis thaliana (Mouse-ear cress).